Reading from the N-terminus, the 487-residue chain is b(0,+)-type amino acid transporter 1 (487 aa).

Residues Met1–Ser15 show a composition bias toward basic and acidic residues. Positions Met1–Lys22 are disordered. At Met1–Gly31 the chain is on the cytoplasmic side. Phosphoserine is present on Ser18. A helical membrane pass occupies residues Leu32–Val55. L-arginine is bound at residue Ile43–Gly47. Residues Leu56–Val62 are Extracellular-facing. A helical transmembrane segment spans residues Gly63–Ala84. Residues Glu85–Tyr110 are Cytoplasmic-facing. Residues Leu111–Cys137 traverse the membrane as a helical segment. At Ala138 to Pro147 the chain is on the extracellular side. 2 consecutive transmembrane segments (helical) span residues Gln148–Ser169 and Val170–Ile193. The Extracellular segment spans residues Ser194–Ser217. Residues Val218–Leu238 traverse the membrane as a helical segment. Position 233 (Asp233) interacts with L-arginine. Residues Asn239–Asn251 lie on the Cytoplasmic side of the membrane. The helical transmembrane segment at Leu252–Tyr274 threads the bilayer. The Extracellular portion of the chain corresponds to Phe275–Ser302. A helical transmembrane segment spans residues Trp303 to Gly325. At Arg326–Pro351 the chain is on the cytoplasmic side. 2 consecutive transmembrane segments (helical) span residues Ala352 to Asp370 and Ile371 to Leu391. Residues Gly392 to Pro410 are Cytoplasmic-facing. A helical transmembrane segment spans residues Val411–Ser431. Residues Lys432–Thr434 are Extracellular-facing. Residues Trp435–Phe450 traverse the membrane as a helical segment. Over Tyr451 to Glu487 the chain is Cytoplasmic.

This sequence belongs to the amino acid-polyamine-organocation (APC) superfamily. As to quaternary structure, disulfide-linked heterodimer composed of the catalytic light chain subunit SLC7A9 and the heavy chain subunit SLC3A1. The heterodimer is the minimal functional unit. Assembles in heterotetramers (dimers of heterodimers) and higher order oligomers; the oligomerization is mediated by SLC3A1 likely to prevent degradation and facilitate heteromer trafficking to the plasma membrane. Interacts with CAV1. In terms of tissue distribution, expressed in the brush border membrane in the kidney (at protein level). Kidney, small intestine, liver and placenta.

It localises to the apical cell membrane. The protein localises to the cell membrane. The catalysed reaction is L-leucine(out) + L-arginine(in) = L-leucine(in) + L-arginine(out). It carries out the reaction L-histidine(out) + L-arginine(in) = L-histidine(in) + L-arginine(out). The enzyme catalyses L-arginine(in) + L-phenylalanine(out) = L-arginine(out) + L-phenylalanine(in). It catalyses the reaction L-cysteine(out) + L-arginine(in) = L-cysteine(in) + L-arginine(out). The catalysed reaction is L-cystine(out) + L-arginine(in) = L-cystine(in) + L-arginine(out). It carries out the reaction L-lysine(out) + L-arginine(in) = L-lysine(in) + L-arginine(out). Functionally, associates with SLC3A1 to form a functional transporter complex that mediates the electrogenic exchange between cationic amino acids and neutral amino acids, with a stoichiometry of 1:1. Has system b(0,+)-like activity with high affinity for extracellular cationic amino acids and L-cystine and lower affinity for intracellular neutral amino acids. Substrate exchange is driven by high concentration of intracellular neutral amino acids and the intracellular reduction of L-cystine to L-cysteine. Required for reabsorption of L-cystine and dibasic amino acids across the brush border membrane in renal proximal tubules. The polypeptide is b(0,+)-type amino acid transporter 1 (Homo sapiens (Human)).